A 346-amino-acid polypeptide reads, in one-letter code: fMet-Leu-Phe receptor (346 aa).

N-linked (GlcNAc...) asparagine glycans are attached at residues N1 and N7. Residues 1-24 (NSSLPTNISGGTPAVSAGYLFLDI) are Extracellular-facing. The helical transmembrane segment at 25 to 47 (VTYLVFAVTFVLGVLGNGLVIWV) threads the bilayer. Over 48 to 58 (AGFRMTHTVTT) the chain is Cytoplasmic. The chain crosses the membrane as a helical span at residues 59 to 80 (ISYLNLAVADFCFTSTLPFFMV). Over 81–97 (KKAMGGHWPFGWFLCKF) the chain is Extracellular. C95 and C173 are joined by a disulfide. A helical transmembrane segment spans residues 98–118 (IFTIVDINLFGSVFLIALIAL). At 119–137 (DRCVCVLHPVWTQNHRTVS) the chain is on the cytoplasmic side. Residues 138–159 (LAKKVIIGPWVMALLLTLPVII) form a helical membrane-spanning segment. Residues 160 to 202 (RVTTVPGKMGTVACTFNFSPWTNDPKERIKVAVAMLTVRGIIR) lie on the Extracellular side of the membrane. The chain crosses the membrane as a helical span at residues 203 to 223 (FIIGFSAPMSIVAVSYGLIAT). The Cytoplasmic segment spans residues 224–239 (KIDKQGLIKSSRTLRV). A helical membrane pass occupies residues 240–263 (LSFVAAAFFLSWSPYQVVALIATV). The Extracellular segment spans residues 264–282 (RIRELLQGMYKEIGIAVDV). The helical transmembrane segment at 283-302 (TSALAFFNSCLNPMLYVFMG) threads the bilayer. The Cytoplasmic portion of the chain corresponds to 303-346 (QDFRERLIHALPASLERALTEDSTQTSDTATNSTLPSAEVALQA). The interval 322-346 (TEDSTQTSDTATNSTLPSAEVALQA) is disordered. A compositionally biased stretch (polar residues) spans 323 to 338 (EDSTQTSDTATNSTLP).

The protein belongs to the G-protein coupled receptor 1 family. Phosphorylated; which is necessary for desensitization.

Its subcellular location is the cell membrane. In terms of biological role, high affinity receptor for N-formyl-methionyl peptides (fMLP), which are powerful neutrophil chemotactic factors. Binding of fMLP to the receptor stimulates intracellular calcium mobilization and superoxide anion release. This response is mediated via a G-protein that activates a phosphatidylinositol-calcium second messenger system. Receptor for TAFA4, mediates its effects on chemoattracting macrophages, promoting phagocytosis and increasing ROS release. Receptor for cathepsin CTSG, leading to increased phagocyte chemotaxis. This Gorilla gorilla gorilla (Western lowland gorilla) protein is fMet-Leu-Phe receptor (FPR1).